Consider the following 357-residue polypeptide: UPF0324 membrane protein BMEI1914 (357 aa).

11 helical membrane passes run 29-48, 58-77, 90-112, 117-136, 149-171, 181-203, 210-232, 242-261, 268-290, 300-322, and 334-356; these read NILP…MVLE, AWLE…RSLA, SAKL…SAVI, GLIF…SYGI, LVAC…VIGA, AFTA…LLGL, ILAG…VSLL, LVRV…ISGN, PGFF…LHSL, AIQY…GVDI, and LTAI…MLGV.

It belongs to the UPF0324 family.

It localises to the cell membrane. The polypeptide is UPF0324 membrane protein BMEI1914 (Brucella melitensis biotype 1 (strain ATCC 23456 / CCUG 17765 / NCTC 10094 / 16M)).